A 529-amino-acid polypeptide reads, in one-letter code: Glycylpeptide N-tetradecanoyltransferase 2 (529 aa).

Residues 1–82 (MAEDSESAAS…QEIKIQQSSK (82 aa)) form a disordered region. A compositionally biased stretch (acidic residues) spans 15–32 (ELDDQDTCGIDGDNEEET). S38 bears the Phosphoserine mark. The segment covering 46 to 57 (KKKKKKQKRKKE) has biased composition (basic residues). The segment covering 61 to 82 (SGGTKSDSASDSQEIKIQQSSK) has biased composition (polar residues). Residues W153, L281, V283, S289, R291, V292, and A293 each coordinate tetradecanoyl-CoA.

The protein belongs to the NMT family.

Its subcellular location is the cytoplasm. The protein localises to the membrane. It carries out the reaction N-terminal glycyl-[protein] + tetradecanoyl-CoA = N-tetradecanoylglycyl-[protein] + CoA + H(+). The catalysed reaction is N-terminal glycyl-L-lysyl-[protein] + tetradecanoyl-CoA = N-terminal glycyl-(N(6)-tetradecanoyl)-L-lysyl-[protein] + CoA + H(+). Its function is as follows. Adds a myristoyl group to the N-terminal glycine residue of certain cellular and viral proteins. Also able to mediate N-terminal lysine myristoylation of proteins: catalyzes myristoylation of ARF6 on both 'Gly-2' and 'Lys-3'. Lysine myristoylation is required to maintain ARF6 on membranes during the GTPase cycle. In Mus musculus (Mouse), this protein is Glycylpeptide N-tetradecanoyltransferase 2 (Nmt2).